The primary structure comprises 419 residues: UDP-N-acetylglucosamine 1-carboxyvinyltransferase (419 aa).

22–23 (KN) provides a ligand contact to phosphoenolpyruvate. Position 92 (arginine 92) interacts with UDP-N-acetyl-alpha-D-glucosamine. The Proton donor role is filled by cysteine 116. Cysteine 116 carries the 2-(S-cysteinyl)pyruvic acid O-phosphothioketal modification. UDP-N-acetyl-alpha-D-glucosamine-binding positions include 121 to 125 (RPIDL), aspartate 306, and isoleucine 328.

The protein belongs to the EPSP synthase family. MurA subfamily.

The protein resides in the cytoplasm. It carries out the reaction phosphoenolpyruvate + UDP-N-acetyl-alpha-D-glucosamine = UDP-N-acetyl-3-O-(1-carboxyvinyl)-alpha-D-glucosamine + phosphate. It functions in the pathway cell wall biogenesis; peptidoglycan biosynthesis. In terms of biological role, cell wall formation. Adds enolpyruvyl to UDP-N-acetylglucosamine. Target for the antibiotic fosfomycin. Involved in heteroresistance to antibiotic fosfomycin. Heteroresistance is the ability of a clonal population to grow one or several subpopulations at a frequency of 10(-7) to 10(-3) in the presence of a higher antibiotic concentration than that predicted to be effective by measurement of the minimum inhibitory concentration (MIC). This chain is UDP-N-acetylglucosamine 1-carboxyvinyltransferase, found in Streptococcus pneumoniae serotype 2 (strain D39 / NCTC 7466).